Consider the following 257-residue polypeptide: MLLGVNIDHIAVLRQARMVNDPDLLEAAFIAAKHGDQITLHVREDRRHAQDFDLENIIKFCKSPINLECALNDEILNLALKLKPHRVTLVPEKREELTTEGGLCLNHTKLKQSIEKLQNANIEVSLFINPSLEDIEKSKNLKAQFIELHTGHYANLHNALFSNISHTAFALKELGQDKKNLQAQFEKELQNLELCAKKGTELGLKVAAGHGLNYKNVKPVVKIKEICELNIGQSIVARSVFTGLQNAILEMKELIKR.

N6 provides a ligand contact to 3-amino-2-oxopropyl phosphate. 8 to 9 is a 1-deoxy-D-xylulose 5-phosphate binding site; it reads DH. Position 17 (R17) interacts with 3-amino-2-oxopropyl phosphate. The Proton acceptor role is filled by H41. 2 residues coordinate 1-deoxy-D-xylulose 5-phosphate: R43 and H48. Residue E68 is the Proton acceptor of the active site. T98 is a binding site for 1-deoxy-D-xylulose 5-phosphate. Catalysis depends on H210, which acts as the Proton donor. Residues G211 and 232-233 each bind 3-amino-2-oxopropyl phosphate; that span reads GQ.

Belongs to the PNP synthase family. In terms of assembly, homooctamer; tetramer of dimers.

Its subcellular location is the cytoplasm. The enzyme catalyses 3-amino-2-oxopropyl phosphate + 1-deoxy-D-xylulose 5-phosphate = pyridoxine 5'-phosphate + phosphate + 2 H2O + H(+). It participates in cofactor biosynthesis; pyridoxine 5'-phosphate biosynthesis; pyridoxine 5'-phosphate from D-erythrose 4-phosphate: step 5/5. In terms of biological role, catalyzes the complicated ring closure reaction between the two acyclic compounds 1-deoxy-D-xylulose-5-phosphate (DXP) and 3-amino-2-oxopropyl phosphate (1-amino-acetone-3-phosphate or AAP) to form pyridoxine 5'-phosphate (PNP) and inorganic phosphate. The protein is Pyridoxine 5'-phosphate synthase of Campylobacter jejuni subsp. jejuni serotype O:6 (strain 81116 / NCTC 11828).